The chain runs to 473 residues: Purple acid phosphatase 1 (473 aa).

The signal sequence occupies residues 1-38 (MRLVVVGLWCLILGLILNPTKFCDAGVTSSYVRKSLSA). An N-linked (GlcNAc...) asparagine glycan is attached at asparagine 118. Aspartate 172 is a binding site for Fe cation. A glycan (N-linked (GlcNAc...) asparagine) is linked at asparagine 180. Residues aspartate 201 and tyrosine 204 each contribute to the Fe cation site. Aspartate 201 serves as a coordination point for Mn(2+). Asparagine 238 serves as a coordination point for Mn(2+). Residue asparagine 238 participates in substrate binding. An N-linked (GlcNAc...) asparagine glycan is attached at asparagine 311. Residue histidine 323 coordinates Mn(2+). Histidine 333 functions as the Proton donor in the catalytic mechanism. Mn(2+) is bound at residue histidine 360. 360–362 (HVH) contributes to the substrate binding site. Histidine 362 contributes to the Fe cation binding site. Asparagine 433 is a glycosylation site (N-linked (GlcNAc...) asparagine).

This sequence belongs to the metallophosphoesterase superfamily. Purple acid phosphatase family. In terms of assembly, homodimer; disulfide-linked. The cofactor is Fe cation. Mn(2+) serves as cofactor. Zn(2+) is required as a cofactor. It depends on Cu(2+) as a cofactor. Requires Mg(2+) as cofactor.

It is found in the secreted. The enzyme catalyses a phosphate monoester + H2O = an alcohol + phosphate. In Ipomoea batatas (Sweet potato), this protein is Purple acid phosphatase 1 (PAP1).